Consider the following 524-residue polypeptide: Tissue-resident T-cell transcription regulator protein ZNF683 (524 aa).

Over residues 130–142 (NKDKLGKQPERAG) the composition is skewed to basic and acidic residues. Disordered stretches follow at residues 130-166 (NKDK…NRKS) and 265-303 (QALP…LSSQ). C2H2-type zinc fingers lie at residues 322 to 344 (YECN…LRVH) and 350 to 372 (FQCA…HLVH). The C2H2-type 3; degenerate zinc finger occupies 398-420 (REREVCHKRFSSSSNLKTHLRLH). The C2H2-type 4 zinc finger occupies 426–448 (FQCSVCRSRFTQHIHLKLHHRLH).

It belongs to the krueppel C2H2-type zinc-finger protein family. In terms of tissue distribution, expressed in terminally differentiated effector CD8(+) T-cells, but not in naive and central memory cells. Expressed in terminally differentiated natural killer (NK) cells and natural killer (NKT) T-cells (at protein level). Expressed strongly in effector-type CD8(+) T-cells and weakly in naive and memory CD8(+) T-cells. Expressed in terminally differentiated natural killer (NK) cells. Isoform 2 is strongly expressed in effector CD8(+) T and natural killer (NK) cells. Isoform 1 is expressed in effector CD8(+) T and natural killer (NK) cells. As to expression, (Microbial infection) Expressed in cytomegalovirus (CMV)-infected effector CD8(+) T-cells (at protein level).

The protein resides in the nucleus. Transcription factor that mediates a transcriptional program in various innate and adaptive immune tissue-resident lymphocyte T-cell types such as tissue-resident memory T (Trm), natural killer (trNK) and natural killer T (NKT) cells and negatively regulates gene expression of proteins that promote the egress of tissue-resident T-cell populations from non-lymphoid organs. Plays a role in the development, retention and long-term establishment of adaptive and innate tissue-resident lymphocyte T cell types in non-lymphoid organs, such as the skin and gut, but also in other nonbarrier tissues like liver and kidney, and therefore may provide immediate immunological protection against reactivating infections or viral reinfection. Also plays a role in the differentiation of both thymic and peripheral NKT cells. Negatively regulates the accumulation of interferon-gamma (IFN-gamma) in NKT cells at steady state or after antigenic stimulation. Positively regulates granzyme B production in NKT cells after innate stimulation. Associates with the transcriptional repressor PRDM1/BLIMP1 to chromatin at gene promoter regions. Functionally, lacks transcriptional repressor activity. Binds to DNA within promoter regions of the transcriptional repressor PRDM1/BLIMP1 target sites. Unable to regulate interferon-gamma (IFN-gamma) production in cytomegalovirus (CMV)-infected effector CD8(+) T-cells. Its function is as follows. Transcriptional repressor that binds to DNA within promoter regions of the transcriptional repressor PRDM1/BLIMP1 target sites. Regulates interferon-gamma (IFN-gamma) production in cytomegalovirus (CMV)-infected effector CD8(+) T cells. The chain is Tissue-resident T-cell transcription regulator protein ZNF683 from Homo sapiens (Human).